The primary structure comprises 200 residues: ATP-dependent Clp protease proteolytic subunit (200 aa).

Residue serine 102 is the Nucleophile of the active site. The active site involves histidine 127.

Belongs to the peptidase S14 family. As to quaternary structure, fourteen ClpP subunits assemble into 2 heptameric rings which stack back to back to give a disk-like structure with a central cavity, resembling the structure of eukaryotic proteasomes.

It is found in the cytoplasm. It catalyses the reaction Hydrolysis of proteins to small peptides in the presence of ATP and magnesium. alpha-casein is the usual test substrate. In the absence of ATP, only oligopeptides shorter than five residues are hydrolyzed (such as succinyl-Leu-Tyr-|-NHMec, and Leu-Tyr-Leu-|-Tyr-Trp, in which cleavage of the -Tyr-|-Leu- and -Tyr-|-Trp bonds also occurs).. In terms of biological role, cleaves peptides in various proteins in a process that requires ATP hydrolysis. Has a chymotrypsin-like activity. Plays a major role in the degradation of misfolded proteins. This Dehalococcoides mccartyi (strain ATCC BAA-2266 / KCTC 15142 / 195) (Dehalococcoides ethenogenes (strain 195)) protein is ATP-dependent Clp protease proteolytic subunit.